Consider the following 49-residue polypeptide: uncharacterized protein (49 aa).

A helical membrane pass occupies residues 8–28; that stretch reads FFLFSSGVLQATTLLLVILIF.

Its subcellular location is the cell membrane. This is an uncharacterized protein from Bacillus subtilis (strain 168).